The sequence spans 389 residues: Dihydroorotase (389 aa).

His51 and His53 together coordinate Zn(2+). Substrate-binding positions include 53 to 55 (HVR) and Asn85. Residues Lys133, His158, His192, and Asp254 each contribute to the Zn(2+) site. N6-carboxylysine is present on Lys133. Asp254 is an active-site residue. Substrate is bound by residues His258 and 272–273 (PG).

Belongs to the metallo-dependent hydrolases superfamily. DHOase family. Class I DHOase subfamily. The cofactor is Zn(2+).

It carries out the reaction (S)-dihydroorotate + H2O = N-carbamoyl-L-aspartate + H(+). Its pathway is pyrimidine metabolism; UMP biosynthesis via de novo pathway; (S)-dihydroorotate from bicarbonate: step 3/3. Catalyzes the reversible cyclization of carbamoyl aspartate to dihydroorotate. The chain is Dihydroorotase from Sulfurisphaera tokodaii (strain DSM 16993 / JCM 10545 / NBRC 100140 / 7) (Sulfolobus tokodaii).